A 715-amino-acid chain; its full sequence is Fatty acid oxidation complex subunit alpha (715 aa).

Residues 1-189 form an enoyl-CoA hydratase/isomerase region; that stretch reads MIYQGETLTV…KVGAIDAVVA (189 aa). Asp-296 serves as a coordination point for substrate. Residues 311–715 are 3-hydroxyacyl-CoA dehydrogenase; sequence AKATSHAAVL…EMAAQGKTFY (405 aa). NAD(+)-binding positions include Met-325, Asp-344, 401 to 403, Lys-408, and Ser-430; that span reads VVE. His-451 functions as the For 3-hydroxyacyl-CoA dehydrogenase activity in the catalytic mechanism. Asn-454 is an NAD(+) binding site. Substrate contacts are provided by Asn-501 and Tyr-661.

This sequence in the N-terminal section; belongs to the enoyl-CoA hydratase/isomerase family. In the C-terminal section; belongs to the 3-hydroxyacyl-CoA dehydrogenase family. In terms of assembly, heterotetramer of two alpha chains (FadB) and two beta chains (FadA).

It catalyses the reaction a (3S)-3-hydroxyacyl-CoA + NAD(+) = a 3-oxoacyl-CoA + NADH + H(+). The catalysed reaction is a (3S)-3-hydroxyacyl-CoA = a (2E)-enoyl-CoA + H2O. The enzyme catalyses a 4-saturated-(3S)-3-hydroxyacyl-CoA = a (3E)-enoyl-CoA + H2O. It carries out the reaction (3S)-3-hydroxybutanoyl-CoA = (3R)-3-hydroxybutanoyl-CoA. It catalyses the reaction a (3Z)-enoyl-CoA = a 4-saturated (2E)-enoyl-CoA. The catalysed reaction is a (3E)-enoyl-CoA = a 4-saturated (2E)-enoyl-CoA. Its pathway is lipid metabolism; fatty acid beta-oxidation. Involved in the aerobic and anaerobic degradation of long-chain fatty acids via beta-oxidation cycle. Catalyzes the formation of 3-oxoacyl-CoA from enoyl-CoA via L-3-hydroxyacyl-CoA. It can also use D-3-hydroxyacyl-CoA and cis-3-enoyl-CoA as substrate. The chain is Fatty acid oxidation complex subunit alpha from Aeromonas hydrophila subsp. hydrophila (strain ATCC 7966 / DSM 30187 / BCRC 13018 / CCUG 14551 / JCM 1027 / KCTC 2358 / NCIMB 9240 / NCTC 8049).